The chain runs to 77 residues: Conotoxin Vc6b (77 aa).

Residues 1-22 form the signal peptide; the sequence is MKLTCMMIVAVLFLTANTFVTA. A propeptide spanning residues 23–47 is cleaved from the precursor; that stretch reads DDSGNGMENLFPKAGHEMENLEASN. 3 disulfides stabilise this stretch: Cys52–Cys66, Cys59–Cys72, and Cys67–Cys76.

Expressed by the venom duct.

Its subcellular location is the secreted. The protein is Conotoxin Vc6b of Conus victoriae (Queen Victoria cone).